Consider the following 678-residue polypeptide: Dihydroxyacetone phosphate acyltransferase (678 aa).

2 positions are modified to phosphoserine: serine 12 and serine 17. Residues 161–166 (HRSYID) carry the HXXXXD motif motif. N6-acetyllysine is present on lysine 641. The short motif at 676 to 678 (AKL) is the Microbody targeting signal element.

This sequence belongs to the GPAT/DAPAT family. As to quaternary structure, part of a heterotrimeric complex composed of GNPAT, AGPS and a modified form of GNPAT. In terms of tissue distribution, highly expressed in liver and testis. Lower levels in heart, brain, lung and kidney. Detected in spleen.

The protein localises to the peroxisome membrane. The enzyme catalyses dihydroxyacetone phosphate + an acyl-CoA = a 1-acylglycerone 3-phosphate + CoA. The catalysed reaction is dihydroxyacetone phosphate + hexadecanoyl-CoA = 1-hexadecanoylglycerone 3-phosphate + CoA. It functions in the pathway membrane lipid metabolism; glycerophospholipid metabolism. Its function is as follows. Dihydroxyacetonephosphate acyltransferase catalyzing the first step in the biosynthesis of plasmalogens, a subset of phospholipids that differ from other glycerolipids by having an alkyl chain attached through a vinyl ether linkage at the sn-1 position of the glycerol backbone, and which unique physical properties have an impact on various aspects of cell signaling and membrane biology. The chain is Dihydroxyacetone phosphate acyltransferase from Mus musculus (Mouse).